Here is a 432-residue protein sequence, read N- to C-terminus: Glial fibrillary acidic protein (432 aa).

The tract at residues 1–72 is head; it reads MERRRITSAA…KETRASERAE (72 aa). A Phosphothreonine; by AURKB and ROCK1 modification is found at T7. Omega-N-methylarginine is present on R12. S13 carries the phosphoserine; by AURKB and ROCK1 modification. Citrulline occurs at positions 30 and 36. The residue at position 38 (S38) is a Phosphoserine; by AURKB and ROCK1. Residues 69-377 form the IF rod domain; sequence ERAEMMELND…KLLEGEENRI (309 aa). The interval 73 to 104 is coil 1A; that stretch reads MMELNDRFASYIEKVRFLEQQNKALAAELNQL. Position 82 is a phosphoserine (S82). A linker 1 region spans residues 105-115; the sequence is RAKEPTKLADV. Phosphothreonine is present on residues T110 and T150. The coil 1B stretch occupies residues 116 to 214; that stretch reads YQAELRELRL…EEEVRELQEQ (99 aa). Positions 215–230 are linker 12; that stretch reads LARQQVHVELDMAKPD. The tract at residues 231–252 is coil 2A; sequence LTAALKEIRTQYEAMASSNMHE. The tract at residues 253–256 is linker 2; it reads AEEW. Positions 257-377 are coil 2B; the sequence is YRSKFADLTD…KLLEGEENRI (121 aa). The residue at position 270 (R270) is a Citrulline. Phosphoserine is present on S323. The interval 378–432 is tail; the sequence is TIPVQTFSNLQIRETSLDTKSVSEGHLKRNIVVKTVEMRDGEVIKESKQEHKDVM. T383 is subject to Phosphothreonine. S385 carries the phosphoserine modification. Citrulline occurs at positions 406 and 416.

This sequence belongs to the intermediate filament family. In terms of assembly, interacts with SYNM. Phosphorylated by PKN1.

It is found in the cytoplasm. In terms of biological role, GFAP, a class-III intermediate filament, is a cell-specific marker that, during the development of the central nervous system, distinguishes astrocytes from other glial cells. The protein is Glial fibrillary acidic protein (GFAP) of Pongo abelii (Sumatran orangutan).